Here is a 301-residue protein sequence, read N- to C-terminus: Acetylglutamate kinase (301 aa).

Substrate-binding positions include 68–69 (GG), Arg-90, and Asn-195.

It belongs to the acetylglutamate kinase family. ArgB subfamily.

Its subcellular location is the cytoplasm. It carries out the reaction N-acetyl-L-glutamate + ATP = N-acetyl-L-glutamyl 5-phosphate + ADP. It functions in the pathway amino-acid biosynthesis; L-arginine biosynthesis; N(2)-acetyl-L-ornithine from L-glutamate: step 2/4. In terms of biological role, catalyzes the ATP-dependent phosphorylation of N-acetyl-L-glutamate. The polypeptide is Acetylglutamate kinase (Pseudomonas fluorescens (strain ATCC BAA-477 / NRRL B-23932 / Pf-5)).